The following is a 21-amino-acid chain: Azemiopsin (21 aa).

Residues 1–14 (DNWWPKPPHQGPRP) show a composition bias toward pro residues. Positions 1–21 (DNWWPKPPHQGPRPPRPRPKP) are disordered. Implicated in receptor binding regions lie at residues 3–6 (WWPK), 8–11 (PHQG), and 13–14 (RP).

As to quaternary structure, monomer. As to expression, expressed by the venom gland.

It is found in the secreted. In terms of biological role, in vitro, reversibly blocks human muscle-type nicotinic acetylcholine receptors (nAChR) alpha-1-beta-1-epsilon-delta/CHRNA1-CHRNB1-CHRNE-CHRND (EC(50)=0.44 uM) and alpha-1-beta-1-gamma-delta/CHRNA1-CHRNB1-CHRNG-CHRND (EC(50)=1.56 uM). Binds to nAChR from T.californica (IC(50)=0.03-0.18 uM), human neuronal nAChR alpha-7/CHRNA7 (IC(50)=22 uM) and acetylcholine-binding proteins (AChBP) from L.stagnalis (IC(50)=63 uM) and A.californica (IC(50)=230 uM). This Azemiops feae (Fea's viper) protein is Azemiopsin.